Here is a 213-residue protein sequence, read N- to C-terminus: Immunoglobulin lambda-like polypeptide 1 (213 aa).

Residues methionine 1–glycine 37 form the signal peptide. Residues valine 97 to serine 108 are j region. The c region stretch occupies residues glutamine 109–serine 213. Residues proline 114–alanine 208 enclose the Ig-like C1-type domain. Cysteines 135 and 194 form a disulfide.

As to quaternary structure, associates non-covalently with VPREB1. Interacts with SYNV1/HRD1 (via N-terminus); this interaction leads to increased IGLL1 ubiquitination and degradation in pre-B cells, possibly through a lysosomal, not proteasomal, pathway. In terms of tissue distribution, expressed only in pre-B-cells and a special B-cell line (which is surface Ig negative).

Its subcellular location is the endoplasmic reticulum. It localises to the secreted. Its function is as follows. Critical for B-cell development. The chain is Immunoglobulin lambda-like polypeptide 1 (IGLL1) from Homo sapiens (Human).